The sequence spans 251 residues: 2-C-methyl-D-erythritol 4-phosphate cytidylyltransferase (251 aa).

The protein belongs to the IspD/TarI cytidylyltransferase family. IspD subfamily.

It carries out the reaction 2-C-methyl-D-erythritol 4-phosphate + CTP + H(+) = 4-CDP-2-C-methyl-D-erythritol + diphosphate. The protein operates within isoprenoid biosynthesis; isopentenyl diphosphate biosynthesis via DXP pathway; isopentenyl diphosphate from 1-deoxy-D-xylulose 5-phosphate: step 2/6. In terms of biological role, catalyzes the formation of 4-diphosphocytidyl-2-C-methyl-D-erythritol from CTP and 2-C-methyl-D-erythritol 4-phosphate (MEP). In Cupriavidus pinatubonensis (strain JMP 134 / LMG 1197) (Cupriavidus necator (strain JMP 134)), this protein is 2-C-methyl-D-erythritol 4-phosphate cytidylyltransferase.